The chain runs to 544 residues: MVAEVCSMPAASAVKKPFDLRSKMGKWCHHRFPCCRGSGTSNVGTSGDHDDSFMKTLRSKMGKWCCHCFPCCRGSGKSNVGTWGDYDDSAFMEPRYHVRREDLDKLHRAAWWGKVPRKDLIVMLRDTDMNKRDKQKRTALHLASANGNSEVVQLLLDRRCQLNVLDNKKRTALIKAVQCQEDECVLMLLEHGADGNIQDEYGNTALHYAIYNEDKLMAKALLLYGADIESKNKCGLTPLLLGVHEQKQEVVKFLIKKKANLNALDRYGRTALILAVCCGSASIVNLLLEQNVDVSSQDLSGQTAREYAVSSHHHVICELLSDYKEKQMLKISSENSNPEQDLKLTSEEESQRLKVSENSQPEKMSQEPEINKDCDREVEEEIKKHGSNPVGLPENLTNGASAGNGDDGLIPQRKSRKPENQQFPDTENEEYHSDEQNDTQKQLSEEQNTGISQDEILTNKQKQIEVAEKEMNSELSLSHKKEEDLLRENSMLREEIAKLRLELDETKHQNQLRENKILEEIESVKEKLLKTIQLNEEALTKTSI.

ANK repeat units lie at residues 135 to 167 (QKRT…VLDN), 168 to 200 (KKRT…IQDE), 201 to 233 (YGNT…SKNK), 234 to 266 (CGLT…ALDR), and 267 to 299 (YGRT…SQDL). Positions 332 to 457 (SSENSNPEQD…NTGISQDEIL (126 aa)) are disordered. 2 stretches are compositionally biased toward basic and acidic residues: residues 340–355 (QDLK…RLKV) and 364–375 (MSQEPEINKDCD). Positions 439–457 (TQKQLSEEQNTGISQDEIL) are enriched in polar residues.

This sequence belongs to the POTE family.

The polypeptide is POTE ankyrin domain family member B2 (POTEB2) (Homo sapiens (Human)).